The sequence spans 58 residues: Large ribosomal subunit protein bL32 (58 aa).

Disordered regions lie at residues 1-22 (MAVP…HWKR) and 39-58 (LSGR…DDEE).

It belongs to the bacterial ribosomal protein bL32 family.

This Crocosphaera subtropica (strain ATCC 51142 / BH68) (Cyanothece sp. (strain ATCC 51142)) protein is Large ribosomal subunit protein bL32.